The primary structure comprises 445 residues: GTPase Der (445 aa).

EngA-type G domains follow at residues 3–167 and 180–353; these read PVIA…YAGQ and IKIA…AAAM. Residues 9-16, 56-60, 119-122, 186-193, 233-237, and 298-301 each bind GTP; these read GRPNVGKS, DTGGF, NKAE, DTAGL, and NKWD. The KH-like domain maps to 354 to 438; the sequence is AKLPTPKLTR…PLRIEFRSSN (85 aa).

The protein belongs to the TRAFAC class TrmE-Era-EngA-EngB-Septin-like GTPase superfamily. EngA (Der) GTPase family. Associates with the 50S ribosomal subunit.

Its function is as follows. GTPase that plays an essential role in the late steps of ribosome biogenesis. The polypeptide is GTPase Der (Burkholderia ambifaria (strain ATCC BAA-244 / DSM 16087 / CCUG 44356 / LMG 19182 / AMMD) (Burkholderia cepacia (strain AMMD))).